A 134-amino-acid polypeptide reads, in one-letter code: Endoribonuclease YbeY (134 aa).

Positions 94, 98, and 104 each coordinate Zn(2+).

Belongs to the endoribonuclease YbeY family. Zn(2+) serves as cofactor.

The protein localises to the cytoplasm. Functionally, single strand-specific metallo-endoribonuclease involved in late-stage 70S ribosome quality control and in maturation of the 3' terminus of the 16S rRNA. The polypeptide is Endoribonuclease YbeY (Campylobacter fetus subsp. fetus (strain 82-40)).